The sequence spans 274 residues: Sulfur carrier protein FdhD (274 aa).

The active-site Cysteine persulfide intermediate is the Cys-121. A Mo-bis(molybdopterin guanine dinucleotide)-binding site is contributed by 258–263 (FSKPGR).

It belongs to the FdhD family.

The protein resides in the cytoplasm. Its function is as follows. Required for formate dehydrogenase (FDH) activity. Acts as a sulfur carrier protein that transfers sulfur from IscS to the molybdenum cofactor prior to its insertion into FDH. The polypeptide is Sulfur carrier protein FdhD (Yersinia pseudotuberculosis serotype O:1b (strain IP 31758)).